Here is a 372-residue protein sequence, read N- to C-terminus: Queuine tRNA-ribosyltransferase (372 aa).

Residue aspartate 92 is the Proton acceptor of the active site. Residues aspartate 92–tyrosine 96, aspartate 146, glutamine 188, and glycine 215 contribute to the substrate site. Positions glycine 246 to glutamate 252 are RNA binding. Residue aspartate 265 is the Nucleophile of the active site. The RNA binding; important for wobble base 34 recognition stretch occupies residues threonine 270–arginine 274. 4 residues coordinate Zn(2+): cysteine 303, cysteine 305, cysteine 308, and histidine 334.

The protein belongs to the queuine tRNA-ribosyltransferase family. As to quaternary structure, homodimer. Within each dimer, one monomer is responsible for RNA recognition and catalysis, while the other monomer binds to the replacement base PreQ1. Zn(2+) serves as cofactor.

It carries out the reaction 7-aminomethyl-7-carbaguanine + guanosine(34) in tRNA = 7-aminomethyl-7-carbaguanosine(34) in tRNA + guanine. It participates in tRNA modification; tRNA-queuosine biosynthesis. Catalyzes the base-exchange of a guanine (G) residue with the queuine precursor 7-aminomethyl-7-deazaguanine (PreQ1) at position 34 (anticodon wobble position) in tRNAs with GU(N) anticodons (tRNA-Asp, -Asn, -His and -Tyr). Catalysis occurs through a double-displacement mechanism. The nucleophile active site attacks the C1' of nucleotide 34 to detach the guanine base from the RNA, forming a covalent enzyme-RNA intermediate. The proton acceptor active site deprotonates the incoming PreQ1, allowing a nucleophilic attack on the C1' of the ribose to form the product. After dissociation, two additional enzymatic reactions on the tRNA convert PreQ1 to queuine (Q), resulting in the hypermodified nucleoside queuosine (7-(((4,5-cis-dihydroxy-2-cyclopenten-1-yl)amino)methyl)-7-deazaguanosine). The protein is Queuine tRNA-ribosyltransferase of Prochlorococcus marinus (strain SARG / CCMP1375 / SS120).